The primary structure comprises 433 residues: Glycerol-3-phosphate dehydrogenase [NAD(+)] (433 aa).

NAD(+) is bound by residues 17-22, F49, and F117; that span reads GSGNWG. Residue K140 coordinates substrate. An NAD(+)-binding site is contributed by A173. Positions 187–246 are disordered; that stretch reads IAYDPPPIDSSRAATPRDRSPNYDSTSANKLPDLTVTSADSNGKDDRGRRTKAKLTPVPE. Residues 208 to 227 are compositionally biased toward polar residues; sequence NYDSTSANKLPDLTVTSADS. K283 (proton acceptor) is an active-site residue. 2 residues coordinate NAD(+): R349 and Q378. 349-350 is a substrate binding site; the sequence is RN.

This sequence belongs to the NAD-dependent glycerol-3-phosphate dehydrogenase family.

The catalysed reaction is sn-glycerol 3-phosphate + NAD(+) = dihydroxyacetone phosphate + NADH + H(+). This is Glycerol-3-phosphate dehydrogenase [NAD(+)] from Pyricularia oryzae (strain Y34) (Rice blast fungus).